Consider the following 205-residue polypeptide: Urease accessory protein UreE (205 aa).

Basic and acidic residues predominate over residues 171 to 192 (HHGHSHSHDHDHDHDHDHDHQH). The segment at 171–205 (HHGHSHSHDHDHDHDHDHDHQHGPCCSHGHHHGHR) is disordered.

Belongs to the UreE family.

It localises to the cytoplasm. Its function is as follows. Involved in urease metallocenter assembly. Binds nickel. Probably functions as a nickel donor during metallocenter assembly. The sequence is that of Urease accessory protein UreE from Burkholderia pseudomallei (strain K96243).